We begin with the raw amino-acid sequence, 264 residues long: S-adenosylmethionine decarboxylase proenzyme (264 aa).

The active-site Schiff-base intermediate with substrate; via pyruvic acid is the Ser-113. The residue at position 113 (Ser-113) is a Pyruvic acid (Ser); by autocatalysis. His-118 functions as the Proton acceptor; for processing activity in the catalytic mechanism. Residue Cys-141 is the Proton donor; for catalytic activity of the active site.

Belongs to the prokaryotic AdoMetDC family. Type 2 subfamily. As to quaternary structure, heterooctamer of four alpha and four beta chains arranged as a tetramer of alpha/beta heterodimers. The cofactor is pyruvate. Is synthesized initially as an inactive proenzyme. Formation of the active enzyme involves a self-maturation process in which the active site pyruvoyl group is generated from an internal serine residue via an autocatalytic post-translational modification. Two non-identical subunits are generated from the proenzyme in this reaction, and the pyruvate is formed at the N-terminus of the alpha chain, which is derived from the carboxyl end of the proenzyme. The post-translation cleavage follows an unusual pathway, termed non-hydrolytic serinolysis, in which the side chain hydroxyl group of the serine supplies its oxygen atom to form the C-terminus of the beta chain, while the remainder of the serine residue undergoes an oxidative deamination to produce ammonia and the pyruvoyl group blocking the N-terminus of the alpha chain.

The catalysed reaction is S-adenosyl-L-methionine + H(+) = S-adenosyl 3-(methylsulfanyl)propylamine + CO2. It functions in the pathway amine and polyamine biosynthesis; S-adenosylmethioninamine biosynthesis; S-adenosylmethioninamine from S-adenosyl-L-methionine: step 1/1. Functionally, catalyzes the decarboxylation of S-adenosylmethionine to S-adenosylmethioninamine (dcAdoMet), the propylamine donor required for the synthesis of the polyamines spermine and spermidine from the diamine putrescine. The sequence is that of S-adenosylmethionine decarboxylase proenzyme from Pseudomonas paraeruginosa (strain DSM 24068 / PA7) (Pseudomonas aeruginosa (strain PA7)).